Reading from the N-terminus, the 339-residue chain is DNA-directed RNA polymerase subunit alpha (339 aa).

The tract at residues Met-1–Glu-233 is alpha N-terminal domain (alpha-NTD). The alpha C-terminal domain (alpha-CTD) stretch occupies residues Lys-264 to Phe-339.

The protein belongs to the RNA polymerase alpha chain family. In terms of assembly, in plastids the minimal PEP RNA polymerase catalytic core is composed of four subunits: alpha, beta, beta', and beta''. When a (nuclear-encoded) sigma factor is associated with the core the holoenzyme is formed, which can initiate transcription.

Its subcellular location is the plastid. The protein localises to the chloroplast. It carries out the reaction RNA(n) + a ribonucleoside 5'-triphosphate = RNA(n+1) + diphosphate. Its function is as follows. DNA-dependent RNA polymerase catalyzes the transcription of DNA into RNA using the four ribonucleoside triphosphates as substrates. The polypeptide is DNA-directed RNA polymerase subunit alpha (Aegilops uniaristata (Goatgrass)).